Here is a 321-residue protein sequence, read N- to C-terminus: Phospho-N-acetylmuramoyl-pentapeptide-transferase (321 aa).

10 helical membrane-spanning segments follow: residues M1–I21, M50–V70, I76–I96, F112–V132, I140–W160, G176–L196, A200–L220, V225–M245, L250–V270, and V300–V320.

The protein belongs to the glycosyltransferase 4 family. MraY subfamily. The cofactor is Mg(2+).

It localises to the cell membrane. It carries out the reaction UDP-N-acetyl-alpha-D-muramoyl-L-alanyl-gamma-D-glutamyl-L-lysyl-D-alanyl-D-alanine + di-trans,octa-cis-undecaprenyl phosphate = Mur2Ac(oyl-L-Ala-gamma-D-Glu-L-Lys-D-Ala-D-Ala)-di-trans,octa-cis-undecaprenyl diphosphate + UMP. It participates in cell wall biogenesis; peptidoglycan biosynthesis. Its function is as follows. Catalyzes the initial step of the lipid cycle reactions in the biosynthesis of the cell wall peptidoglycan: transfers peptidoglycan precursor phospho-MurNAc-pentapeptide from UDP-MurNAc-pentapeptide onto the lipid carrier undecaprenyl phosphate, yielding undecaprenyl-pyrophosphoryl-MurNAc-pentapeptide, known as lipid I. The sequence is that of Phospho-N-acetylmuramoyl-pentapeptide-transferase from Staphylococcus epidermidis (strain ATCC 35984 / DSM 28319 / BCRC 17069 / CCUG 31568 / BM 3577 / RP62A).